Consider the following 535-residue polypeptide: Probable histone-arginine methyltransferase 1.3 (535 aa).

Position 1 is an N-acetylmethionine (Met1). The 316-residue stretch at 141-456 folds into the SAM-dependent MTase PRMT-type domain; sequence EASSAKMYFH…QSYTIDLTLS (316 aa). Positions 158, 167, 191, 213, and 243 each coordinate S-adenosyl-L-methionine. Catalysis depends on residues Glu257 and Glu266. Residue Ser271 coordinates S-adenosyl-L-methionine. The disordered stretch occupies residues 494–517; it reads VAQEPPLQPQPELSTQQDIQTPND. Over residues 507-516 the composition is skewed to polar residues; that stretch reads STQQDIQTPN.

Belongs to the class I-like SAM-binding methyltransferase superfamily. Protein arginine N-methyltransferase family. In terms of assembly, interacts with PQT3 in the nucleus. Ubiquitinated by PQT3.

The protein localises to the nucleus. Its subcellular location is the cytoplasm. The catalysed reaction is L-arginyl-[protein] + 2 S-adenosyl-L-methionine = N(omega),N(omega)-dimethyl-L-arginyl-[protein] + 2 S-adenosyl-L-homocysteine + 2 H(+). Functionally, methylates (mono- and asymmetric dimethylation) the guanidino nitrogens of arginyl residues in several proteins involved in DNA packaging, transcription regulation, and mRNA stability. Recruited to promoters upon gene activation, methylates histone H3 and activates transcription via chromatin remodeling. Positive regulator in the oxidative stress tolerance that promotes the expression of enzymes preventing oxidative stress such as APX1 and GPX1 by histone methylation (H3R17me2a). Confers tolerance to cadmium CdCl(2) and salt NaCl stresses. The chain is Probable histone-arginine methyltransferase 1.3 (PRMT13) from Arabidopsis thaliana (Mouse-ear cress).